Reading from the N-terminus, the 227-residue chain is Paired immunoglobulin-like type 2 receptor beta (227 aa).

A signal peptide spans 1–19; that stretch reads MGRPLLLPLLLLLQPPAFL. Residues 20–191 are Extracellular-facing; the sequence is QPGGSTGSGP…WHLSLDTAIR (172 aa). An Ig-like V-type domain is found at 21–143; sequence PGGSTGSGPS…SGRQQLQSIK (123 aa). N100 carries N-linked (GlcNAc...) asparagine glycosylation. A helical membrane pass occupies residues 192-212; the sequence is VALAVAVLKTVILGLLCLLLL. The Cytoplasmic portion of the chain corresponds to 213–227; sequence WWRRRKGSRAPSSDF.

Its subcellular location is the membrane. In terms of biological role, paired receptors consist of highly related activating and inhibitory receptors and are widely involved in the regulation of the immune system. PILRB is thought to act as a cellular signaling activating receptor that associates with ITAM-bearing adapter molecules on the cell surface. The protein is Paired immunoglobulin-like type 2 receptor beta (PILRB) of Homo sapiens (Human).